We begin with the raw amino-acid sequence, 343 residues long: L-threonine 3-dehydrogenase (343 aa).

Residue Cys-40 participates in Zn(2+) binding. Catalysis depends on charge relay system residues Thr-42 and His-45. Positions 65, 66, 95, 98, 101, and 109 each coordinate Zn(2+). Residues Ile-177, Asp-197, Arg-202, 264-266 (LGI), and 288-289 (IY) contribute to the NAD(+) site.

The protein belongs to the zinc-containing alcohol dehydrogenase family. In terms of assembly, homotetramer. Requires Zn(2+) as cofactor.

The protein localises to the cytoplasm. It carries out the reaction L-threonine + NAD(+) = (2S)-2-amino-3-oxobutanoate + NADH + H(+). It participates in amino-acid degradation; L-threonine degradation via oxydo-reductase pathway; glycine from L-threonine: step 1/2. Catalyzes the NAD(+)-dependent oxidation of L-threonine to 2-amino-3-ketobutyrate. This is L-threonine 3-dehydrogenase from Aliivibrio salmonicida (strain LFI1238) (Vibrio salmonicida (strain LFI1238)).